The primary structure comprises 151 residues: MPKYTAVNYLIYLLSKRDYSEYDLRNKLIQKQYDTDEIEHAIQQAQLNNWQNDERYCASFIRYRSQQGIGPRRLKQELRLKGIKDYLISEQLQNTEIDWFSLAELLFEKKRPLDWNIKVKQKMWRFMLSRGFYNEHFSHLMDLEEVSKEYE.

It belongs to the RecX family.

The protein localises to the cytoplasm. Functionally, modulates RecA activity. The polypeptide is Regulatory protein RecX (Haemophilus ducreyi (strain 35000HP / ATCC 700724)).